Consider the following 340-residue polypeptide: Organic solute transporter subunit alpha (340 aa).

The Extracellular segment spans residues 1-52 (MEPDRTQIRLDPRYTADLLEILKTNYSVPSACFSYPPTAAQLLRALGPVDIS). Residue asparagine 25 is glycosylated (N-linked (GlcNAc...) asparagine). A helical transmembrane segment spans residues 53 to 73 (LMVIMTLFVLGSIAIFLEAAV). Residues 74–87 (YLHKNTRCPIKRKT) are Cytoplasmic-facing. A helical transmembrane segment spans residues 88 to 108 (LIWCSSSPTIVSAFSCFGLWI). Over 109–110 (PR) the chain is Extracellular. Residues 111–131 (ALTLVEMAITTFYSMCFYLLM) traverse the membrane as a helical segment. The Cytoplasmic segment spans residues 132 to 186 (QAMVEGFGGKEAVLRTLKDTPVMIHTGPCCCCCPCCPRIKITRKRLQLLLLGPIQ). Residues 187–207 (YAFFKISLTLVGLFLIPDGIF) traverse the membrane as a helical segment. The Extracellular portion of the chain corresponds to 208–219 (DPSDISEGSTAL). Residues 220-240 (WINTFLGVSTLSALWTIGIIF) traverse the membrane as a helical segment. The Cytoplasmic segment spans residues 241–255 (RQARLHLGEQNIGAK). A helical membrane pass occupies residues 256-276 (FVLFQALLILSALQPSIFSVL). The Extracellular portion of the chain corresponds to 277–295 (ASGGQIACSPPFSSKIRSQ). Residues 296–316 (VMNCHLLILESFLITVLTRIY) traverse the membrane as a helical segment. Residues 317 to 340 (YRRKDDKLGYEPFSSPDQDLNLKA) lie on the Cytoplasmic side of the membrane. Serine 330 carries the post-translational modification Phosphoserine.

This sequence belongs to the OST-alpha family. In terms of assembly, interacts with SLC51B. The Ost-alpha/Ost-beta complex is a heterodimer composed of alpha (SLC51A) and beta (SLC51B) subunit.

The protein resides in the cell membrane. It is found in the endoplasmic reticulum membrane. The catalysed reaction is taurocholate(out) = taurocholate(in). The enzyme catalyses estrone 3-sulfate(out) = estrone 3-sulfate(in). It catalyses the reaction dehydroepiandrosterone 3-sulfate(out) = dehydroepiandrosterone 3-sulfate(in). It carries out the reaction tauroursodeoxycholate(out) = tauroursodeoxycholate(in). The catalysed reaction is glycoursodeoxycholate(out) = glycoursodeoxycholate(in). The enzyme catalyses glycocholate(out) = glycocholate(in). It catalyses the reaction taurochenodeoxycholate(out) = taurochenodeoxycholate(in). It carries out the reaction glycochenodeoxycholate(out) = glycochenodeoxycholate(in). The catalysed reaction is taurodeoxycholate(out) = taurodeoxycholate(in). The enzyme catalyses glycodeoxycholate(out) = glycodeoxycholate(in). It catalyses the reaction prostaglandin E2(out) = prostaglandin E2(in). Functionally, essential component of the Ost-alpha/Ost-beta complex, a heterodimer that acts as the intestinal basolateral transporter responsible for bile acid export from enterocytes into portal blood. Efficiently transports the major species of bile acids (taurocholate). Taurine conjugates are transported more efficiently across the basolateral membrane than glycine-conjugated bile acids. Can also transport steroids such as estrone 3-sulfate and dehydroepiandrosterone 3-sulfate, therefore playing a role in the enterohepatic circulation of sterols. Able to transport eicosanoids such as prostaglandin E2. This Bos taurus (Bovine) protein is Organic solute transporter subunit alpha (SLC51A).